We begin with the raw amino-acid sequence, 360 residues long: 3-isopropylmalate dehydrogenase (360 aa).

76 to 89 (GPKWDTIERDIRPE) lines the NAD(+) pocket. Residues Arg96, Arg106, Arg134, and Asp224 each coordinate substrate. Mg(2+) is bound by residues Asp224, Asp248, and Asp252. 282–294 (GSAPDIAGQGIAN) contacts NAD(+).

The protein belongs to the isocitrate and isopropylmalate dehydrogenases family. LeuB type 1 subfamily. Homodimer. Mg(2+) is required as a cofactor. The cofactor is Mn(2+).

It localises to the cytoplasm. It carries out the reaction (2R,3S)-3-isopropylmalate + NAD(+) = 4-methyl-2-oxopentanoate + CO2 + NADH. It functions in the pathway amino-acid biosynthesis; L-leucine biosynthesis; L-leucine from 3-methyl-2-oxobutanoate: step 3/4. Its function is as follows. Catalyzes the oxidation of 3-carboxy-2-hydroxy-4-methylpentanoate (3-isopropylmalate) to 3-carboxy-4-methyl-2-oxopentanoate. The product decarboxylates to 4-methyl-2 oxopentanoate. The sequence is that of 3-isopropylmalate dehydrogenase from Pseudomonas syringae pv. tomato (strain ATCC BAA-871 / DC3000).